The primary structure comprises 405 residues: Arginine biosynthesis bifunctional protein ArgJ (405 aa).

Residues threonine 152, lysine 178, threonine 189, glutamate 276, asparagine 400, and threonine 405 each coordinate substrate. Threonine 189 functions as the Nucleophile in the catalytic mechanism.

The protein belongs to the ArgJ family. Heterotetramer of two alpha and two beta chains.

The protein resides in the cytoplasm. The enzyme catalyses N(2)-acetyl-L-ornithine + L-glutamate = N-acetyl-L-glutamate + L-ornithine. It catalyses the reaction L-glutamate + acetyl-CoA = N-acetyl-L-glutamate + CoA + H(+). Its pathway is amino-acid biosynthesis; L-arginine biosynthesis; L-ornithine and N-acetyl-L-glutamate from L-glutamate and N(2)-acetyl-L-ornithine (cyclic): step 1/1. It functions in the pathway amino-acid biosynthesis; L-arginine biosynthesis; N(2)-acetyl-L-ornithine from L-glutamate: step 1/4. Functionally, catalyzes two activities which are involved in the cyclic version of arginine biosynthesis: the synthesis of N-acetylglutamate from glutamate and acetyl-CoA as the acetyl donor, and of ornithine by transacetylation between N(2)-acetylornithine and glutamate. The chain is Arginine biosynthesis bifunctional protein ArgJ from Pseudomonas fluorescens (strain Pf0-1).